The primary structure comprises 396 residues: 1-deoxy-D-xylulose 5-phosphate reductoisomerase (396 aa).

Residues Thr15, Gly16, Ser17, Ile18, Gly41, and Asn129 each contribute to the NADPH site. Lys130 contacts 1-deoxy-D-xylulose 5-phosphate. NADPH is bound at residue Glu131. Residue Asp155 participates in Mn(2+) binding. Positions 156, 157, 182, and 205 each coordinate 1-deoxy-D-xylulose 5-phosphate. Glu157 contributes to the Mn(2+) binding site. Gly211 serves as a coordination point for NADPH. 1-deoxy-D-xylulose 5-phosphate-binding residues include Ser218, Asn223, Lys224, and Glu227. Glu227 provides a ligand contact to Mn(2+).

Belongs to the DXR family. It depends on Mg(2+) as a cofactor. Requires Mn(2+) as cofactor.

It carries out the reaction 2-C-methyl-D-erythritol 4-phosphate + NADP(+) = 1-deoxy-D-xylulose 5-phosphate + NADPH + H(+). Its pathway is isoprenoid biosynthesis; isopentenyl diphosphate biosynthesis via DXP pathway; isopentenyl diphosphate from 1-deoxy-D-xylulose 5-phosphate: step 1/6. Functionally, catalyzes the NADPH-dependent rearrangement and reduction of 1-deoxy-D-xylulose-5-phosphate (DXP) to 2-C-methyl-D-erythritol 4-phosphate (MEP). The sequence is that of 1-deoxy-D-xylulose 5-phosphate reductoisomerase from Xanthomonas oryzae pv. oryzae (strain MAFF 311018).